Consider the following 339-residue polypeptide: MNIIFWGTPIFCVPILEKLLKSNHNVLAVITQPDRRRGRGNKVLPSPIKQKALEENLPIYTPVNITKEKDIQAKIKQYNADIFVVVAFGQILPKSVLKLPKYGCWNIHASLLPRWRGAAPIQWSILSGDSETGVGLMAMEEGLDTGAVLLEKKLKLKLLENAEQLSQRLKDLSCNLIIEGIEILEKVREQSQSLSKLNLTKQEDINRTYSYARLLMKEDYLINWNDSGYNIHKQILGLYPNCYTYINSKRLKVLESIPINNKYDEFLDFRYKDIILKSQSIINNNGLIIDIIENIGIIVQTKDVPLLITKVKLEGKKESSQNALIQQLTLTNSQNKLGE.

Residue 110–113 participates in (6S)-5,6,7,8-tetrahydrofolate binding; it reads SLLP.

Belongs to the Fmt family.

The catalysed reaction is L-methionyl-tRNA(fMet) + (6R)-10-formyltetrahydrofolate = N-formyl-L-methionyl-tRNA(fMet) + (6S)-5,6,7,8-tetrahydrofolate + H(+). In terms of biological role, attaches a formyl group to the free amino group of methionyl-tRNA(fMet). The formyl group appears to play a dual role in the initiator identity of N-formylmethionyl-tRNA by promoting its recognition by IF2 and preventing the misappropriation of this tRNA by the elongation apparatus. This chain is Methionyl-tRNA formyltransferase, found in Prochlorococcus marinus (strain SARG / CCMP1375 / SS120).